The sequence spans 130 residues: Single-stranded DNA-binding protein 1 (130 aa).

Residues 1 to 104 (MINNVVLIGR…VVAESFQILE (104 aa)) enclose the SSB domain. The disordered stretch occupies residues 108-130 (NTANTSSLADSMPDYGPEPDLPF).

In terms of assembly, homotetramer.

This chain is Single-stranded DNA-binding protein 1 (ssb1), found in Streptococcus pyogenes serotype M18 (strain MGAS8232).